A 247-amino-acid polypeptide reads, in one-letter code: Phosphonates import ATP-binding protein PhnC (247 aa).

Residues 5 to 246 (IEVKNLVKNY…EDDIRKVYQT (242 aa)) enclose the ABC transporter domain. 37–44 (GESGAGKS) contributes to the ATP binding site.

The protein belongs to the ABC transporter superfamily. Phosphonates importer (TC 3.A.1.9.1) family. The complex is composed of two ATP-binding proteins (PhnC), two transmembrane proteins (PhnE) and a solute-binding protein (PhnD).

It is found in the cell inner membrane. It carries out the reaction phosphonate(out) + ATP + H2O = phosphonate(in) + ADP + phosphate + H(+). Functionally, part of the ABC transporter complex PhnCDE involved in phosphonates import. Responsible for energy coupling to the transport system. The chain is Phosphonates import ATP-binding protein PhnC from Fusobacterium nucleatum subsp. nucleatum (strain ATCC 25586 / DSM 15643 / BCRC 10681 / CIP 101130 / JCM 8532 / KCTC 2640 / LMG 13131 / VPI 4355).